We begin with the raw amino-acid sequence, 197 residues long: Imidazoleglycerol-phosphate dehydratase (197 aa).

It belongs to the imidazoleglycerol-phosphate dehydratase family.

The protein resides in the cytoplasm. The enzyme catalyses D-erythro-1-(imidazol-4-yl)glycerol 3-phosphate = 3-(imidazol-4-yl)-2-oxopropyl phosphate + H2O. It functions in the pathway amino-acid biosynthesis; L-histidine biosynthesis; L-histidine from 5-phospho-alpha-D-ribose 1-diphosphate: step 6/9. The chain is Imidazoleglycerol-phosphate dehydratase from Gloeobacter violaceus (strain ATCC 29082 / PCC 7421).